Reading from the N-terminus, the 224-residue chain is GTP cyclohydrolase 1 (224 aa).

Residues 1–20 (MKQEKTVSPTVENNRSAESR) are disordered. The Zn(2+) site is built by Cys114, His117, and Cys185.

The protein belongs to the GTP cyclohydrolase I family. Toroid-shaped homodecamer, composed of two pentamers of five dimers.

It carries out the reaction GTP + H2O = 7,8-dihydroneopterin 3'-triphosphate + formate + H(+). It participates in cofactor biosynthesis; 7,8-dihydroneopterin triphosphate biosynthesis; 7,8-dihydroneopterin triphosphate from GTP: step 1/1. This is GTP cyclohydrolase 1 from Chlorobaculum tepidum (strain ATCC 49652 / DSM 12025 / NBRC 103806 / TLS) (Chlorobium tepidum).